The primary structure comprises 101 residues: Cilia- and flagella-associated protein 141 (101 aa).

Microtubule inner protein component of sperm flagellar doublet microtubules. Expressed in airway epithelial cells.

The protein localises to the cytoplasm. It localises to the cytoskeleton. It is found in the cilium axoneme. The protein resides in the flagellum axoneme. In terms of biological role, microtubule inner protein (MIP) part of the dynein-decorated doublet microtubules (DMTs) in cilia axoneme, which is required for motile cilia beating. The chain is Cilia- and flagella-associated protein 141 from Homo sapiens (Human).